Consider the following 305-residue polypeptide: Oxygen-dependent coproporphyrinogen-III oxidase (305 aa).

Ser92 is a binding site for substrate. The a divalent metal cation site is built by His96 and His106. Catalysis depends on His106, which acts as the Proton donor. Asn108 to Arg110 is a substrate binding site. Residues His145 and His175 each coordinate a divalent metal cation. The tract at residues Tyr239–Glu274 is important for dimerization. Substrate is bound at residue Gly257–Arg259.

Belongs to the aerobic coproporphyrinogen-III oxidase family. In terms of assembly, homodimer. It depends on a divalent metal cation as a cofactor.

The protein localises to the cytoplasm. The enzyme catalyses coproporphyrinogen III + O2 + 2 H(+) = protoporphyrinogen IX + 2 CO2 + 2 H2O. Its pathway is porphyrin-containing compound metabolism; protoporphyrin-IX biosynthesis; protoporphyrinogen-IX from coproporphyrinogen-III (O2 route): step 1/1. In terms of biological role, involved in the heme biosynthesis. Catalyzes the aerobic oxidative decarboxylation of propionate groups of rings A and B of coproporphyrinogen-III to yield the vinyl groups in protoporphyrinogen-IX. This is Oxygen-dependent coproporphyrinogen-III oxidase from Xylella fastidiosa (strain Temecula1 / ATCC 700964).